The primary structure comprises 425 residues: Serine--tRNA ligase (425 aa).

Position 231–233 (231–233 (TAE)) interacts with L-serine. Residues 262-264 (RTE) and Val-278 each bind ATP. L-serine is bound at residue Glu-285. 349 to 352 (EVTS) contributes to the ATP binding site. Thr-384 serves as a coordination point for L-serine.

The protein belongs to the class-II aminoacyl-tRNA synthetase family. Type-1 seryl-tRNA synthetase subfamily. As to quaternary structure, homodimer. The tRNA molecule binds across the dimer.

The protein resides in the cytoplasm. The catalysed reaction is tRNA(Ser) + L-serine + ATP = L-seryl-tRNA(Ser) + AMP + diphosphate + H(+). The enzyme catalyses tRNA(Sec) + L-serine + ATP = L-seryl-tRNA(Sec) + AMP + diphosphate + H(+). It functions in the pathway aminoacyl-tRNA biosynthesis; selenocysteinyl-tRNA(Sec) biosynthesis; L-seryl-tRNA(Sec) from L-serine and tRNA(Sec): step 1/1. Catalyzes the attachment of serine to tRNA(Ser). Is also able to aminoacylate tRNA(Sec) with serine, to form the misacylated tRNA L-seryl-tRNA(Sec), which will be further converted into selenocysteinyl-tRNA(Sec). This chain is Serine--tRNA ligase, found in Dictyoglomus turgidum (strain DSM 6724 / Z-1310).